A 61-amino-acid polypeptide reads, in one-letter code: Metallothionein-2B (61 aa).

The residue at position 1 (Met-1) is an N-acetylmethionine. The interval 1 to 29 (MDPNCSCAAGGSCTCAGSCKCKDCRCTSC) is beta. 20 residues coordinate a divalent metal cation: Cys-5, Cys-7, Cys-13, Cys-15, Cys-19, Cys-21, Cys-24, Cys-26, Cys-29, Cys-33, Cys-34, Cys-36, Cys-37, Cys-41, Cys-44, Cys-48, Cys-50, Cys-57, Cys-59, and Cys-60. Residues 30–61 (KKSCCSCCPAGCARCAQGCICKGASDKCSCCA) are alpha.

Belongs to the metallothionein superfamily. Type 1 family. Monomer.

Its function is as follows. Metallothioneins have a high content of cysteine residues that bind various heavy metals; these proteins are transcriptionally regulated by both heavy metals and glucocorticoids. This is Metallothionein-2B (MT2B) from Sus scrofa (Pig).